Consider the following 1151-residue polypeptide: Syntaxin-binding protein 5 (1151 aa).

The segment at 14 to 34 (TAGSSSASQQQQQQHPPGNRE) is disordered. Positions 17–27 (SSSASQQQQQQ) are enriched in low complexity. WD repeat units lie at residues 61 to 94 (SALA…CYCQ), 101 to 140 (VIQL…SLKF), 145 to 181 (VTFC…GYVI), 200 to 234 (HISD…DYRY), 240 to 272 (IHSV…PAKP), 294 to 336 (PILK…KSTA), 344 to 378 (IVDF…LIDL), 400 to 477 (TCCE…YKLK), 505 to 619 (QIIS…ELVI), and 633 to 695 (TSLA…SGAG). 2 disordered regions span residues 555–595 (ETPE…GLRD) and 674–729 (SNDP…EQKM). The residue at position 692 (Ser-692) is a Phosphoserine. The segment covering 712–721 (SPTSGSSSPH) has biased composition (low complexity). Ser-723 carries the phosphoserine; by PKA modification. Ser-759 carries the phosphoserine modification. A Phosphothreonine modification is found at Thr-762. A Phosphoserine modification is found at Ser-782. Phosphothreonine is present on Thr-784. At Ser-785 the chain carries Phosphoserine. 4 WD repeats span residues 794 to 851 (ISAL…SGTI), 860 to 934 (RMAF…QNCA), 939 to 983 (ITET…LDVY), and 997 to 1020 (CFTN…TYSQ). The segment covering 881-892 (HNVPEEKDEKEK) has biased composition (basic and acidic residues). The interval 881-906 (HNVPEEKDEKEKLKKRRPVSVSPSSS) is disordered. Phosphoserine is present on residues Ser-900 and Ser-902. Thr-1039 carries the post-translational modification Phosphothreonine. Phosphoserine occurs at positions 1058 and 1131. In terms of domain architecture, v-SNARE coiled-coil homology spans 1086–1146 (GIEGVKGAAS…HEIMLKYKDK (61 aa)).

The protein belongs to the WD repeat L(2)GL family. As to quaternary structure, interacts with STX1A and STX1B via its v-SNARE homology domain. Part of a complex that contains STX1, STXBP5, SNAP25 and SYT1. Part of a complex that contains STXBP5, STX4A and SNAP23.

It is found in the cytoplasm. Its subcellular location is the cell membrane. It localises to the cytoplasmic vesicle membrane. The protein resides in the cytoplasmic vesicle. The protein localises to the secretory vesicle. It is found in the synaptic vesicle. Its subcellular location is the synapse. In terms of biological role, plays a regulatory role in calcium-dependent exocytosis and neurotransmitter release. Inhibits membrane fusion between transport vesicles and the plasma membrane. May modulate the assembly of trans-SNARE complexes between transport vesicles and the plasma membrane. Inhibits translocation of GLUT4 from intracellular vesicles to the plasma membrane. Competes with STXBP1 for STX1 binding. This is Syntaxin-binding protein 5 (STXBP5) from Homo sapiens (Human).